Reading from the N-terminus, the 175-residue chain is Adenine phosphoribosyltransferase (175 aa).

Belongs to the purine/pyrimidine phosphoribosyltransferase family. In terms of assembly, homodimer.

It localises to the cytoplasm. It catalyses the reaction AMP + diphosphate = 5-phospho-alpha-D-ribose 1-diphosphate + adenine. Its pathway is purine metabolism; AMP biosynthesis via salvage pathway; AMP from adenine: step 1/1. Catalyzes a salvage reaction resulting in the formation of AMP, that is energically less costly than de novo synthesis. This Synechococcus sp. (strain JA-2-3B'a(2-13)) (Cyanobacteria bacterium Yellowstone B-Prime) protein is Adenine phosphoribosyltransferase.